A 126-amino-acid polypeptide reads, in one-letter code: Urease subunit beta (126 aa).

It belongs to the urease beta subunit family. In terms of assembly, heterotrimer of UreA (gamma), UreB (beta) and UreC (alpha) subunits. Three heterotrimers associate to form the active enzyme.

The protein resides in the cytoplasm. The enzyme catalyses urea + 2 H2O + H(+) = hydrogencarbonate + 2 NH4(+). It participates in nitrogen metabolism; urea degradation; CO(2) and NH(3) from urea (urease route): step 1/1. The chain is Urease subunit beta from Sporosarcina pasteurii (Bacillus pasteurii).